The sequence spans 344 residues: Photosystem II protein D1 (344 aa).

3 helical membrane-spanning segments follow: residues 29–46, 118–133, and 142–156; these read YIGWFGVLMVPTLLTATT, HFFIGVCSYMGREWEL, and WIAVAYSAPVAAATA. A chlorophyll a-binding site is contributed by H118. Residue Y126 coordinates pheophytin a. The [CaMn4O5] cluster site is built by D170 and E189. A helical transmembrane segment spans residues 197–218; the sequence is FHMLGVAGVFGGSLFSAMHGSL. H198 is a binding site for chlorophyll a. A quinone is bound by residues H215 and 264–265; that span reads SF. Position 215 (H215) interacts with Fe cation. H272 lines the Fe cation pocket. Residues 274–288 form a helical membrane-spanning segment; sequence FLAAWPVIGIWFTAM. Residues H332, E333, D342, and A344 each coordinate [CaMn4O5] cluster.

The protein belongs to the reaction center PufL/M/PsbA/D family. PSII is composed of 1 copy each of membrane proteins PsbA, PsbB, PsbC, PsbD, PsbE, PsbF, PsbH, PsbI, PsbJ, PsbK, PsbL, PsbM, PsbT, PsbY, PsbZ, Psb30/Ycf12, at least 3 peripheral proteins of the oxygen-evolving complex and a large number of cofactors. It forms dimeric complexes. The D1/D2 heterodimer binds P680, chlorophylls that are the primary electron donor of PSII, and subsequent electron acceptors. It shares a non-heme iron and each subunit binds pheophytin, quinone, additional chlorophylls, carotenoids and lipids. D1 provides most of the ligands for the Mn4-Ca-O5 cluster of the oxygen-evolving complex (OEC). There is also a Cl(-1) ion associated with D1 and D2, which is required for oxygen evolution. The PSII complex binds additional chlorophylls, carotenoids and specific lipids. is required as a cofactor. Post-translationally, tyr-161 forms a radical intermediate that is referred to as redox-active TyrZ, YZ or Y-Z.

It localises to the plastid. The protein resides in the chloroplast thylakoid membrane. It catalyses the reaction 2 a plastoquinone + 4 hnu + 2 H2O = 2 a plastoquinol + O2. In terms of biological role, photosystem II (PSII) is a light-driven water:plastoquinone oxidoreductase that uses light energy to abstract electrons from H(2)O, generating O(2) and a proton gradient subsequently used for ATP formation. It consists of a core antenna complex that captures photons, and an electron transfer chain that converts photonic excitation into a charge separation. The D1/D2 (PsbA/PsbD) reaction center heterodimer binds P680, the primary electron donor of PSII as well as several subsequent electron acceptors. The protein is Photosystem II protein D1 of Bigelowiella natans (Pedinomonas minutissima).